The sequence spans 136 residues: Large ribosomal subunit protein uL16 (136 aa).

It belongs to the universal ribosomal protein uL16 family. As to quaternary structure, part of the 50S ribosomal subunit.

Functionally, binds 23S rRNA and is also seen to make contacts with the A and possibly P site tRNAs. The protein is Large ribosomal subunit protein uL16 of Rickettsia peacockii (strain Rustic).